The primary structure comprises 275 residues: Photosystem II extrinsic protein O (275 aa).

A signal peptide spans 1–28; the sequence is MRFRTLLIAFLALCLGLITACSEGPANA.

It belongs to the PsbO family. As to quaternary structure, PSII is composed of 1 copy each of membrane proteins PsbA, PsbB, PsbC, PsbD, PsbE, PsbF, PsbH, PsbI, PsbJ, PsbK, PsbL, PsbM, PsbT, PsbX, PsbY, PsbZ, Psb30/Ycf12, peripheral proteins PsbO, CyanoQ (PsbQ), PsbU, PsbV and a large number of cofactors. It forms dimeric complexes.

It is found in the cellular thylakoid membrane. One of the extrinsic, lumenal subunits of photosystem II (PSII), which stabilize and protect the oxygen-evolving complex. PSII is a light-driven water plastoquinone oxidoreductase, using light energy to abstract electrons from H(2)O, generating a proton gradient subsequently used for ATP formation. Required for dimerization of PSII and for binding of PsbQ to PSII. The protein is Photosystem II extrinsic protein O of Crocosphaera subtropica (strain ATCC 51142 / BH68) (Cyanothece sp. (strain ATCC 51142)).